The chain runs to 418 residues: MSVNEIILDMAKAARAASREIGKCSGQVKDKVLTDIAALLKEEASFLYQENAKDLEAAKESGLSSAMIDRLTIKEATIESMAQGLVEVAAMADPVGSMVKMWQRPNGLSVGKMRIPLGVVCMIYESRPNVTIDAAGLCLKAGNAVVLRGGSEAIHSNRALGQVIAKALAKNGLPETVVQLVPMTDREAVKELLAQEEYIDLVIPRGGEGLIRFVVANSSIPVLKHYKGVCHVYVDEGADHGMAVNICQNGKVHRPGVCNAVETLLVNEAEAAAFLPKVAEVLGKDGVEFRGCPKTCAILKDAKPAQEEDWPAEFLDLILAVKVVKDMDEAMDHIAKYGSLHTETIVTDNYTRAKRFCREVDASAVMVNASTRFNDGGQLGLGAEIGISTSKLHAFGPMGVEELTATKFVVEGQGQIRS.

The protein belongs to the gamma-glutamyl phosphate reductase family.

It is found in the cytoplasm. The catalysed reaction is L-glutamate 5-semialdehyde + phosphate + NADP(+) = L-glutamyl 5-phosphate + NADPH + H(+). The protein operates within amino-acid biosynthesis; L-proline biosynthesis; L-glutamate 5-semialdehyde from L-glutamate: step 2/2. Its function is as follows. Catalyzes the NADPH-dependent reduction of L-glutamate 5-phosphate into L-glutamate 5-semialdehyde and phosphate. The product spontaneously undergoes cyclization to form 1-pyrroline-5-carboxylate. This chain is Gamma-glutamyl phosphate reductase, found in Desulfatibacillum aliphaticivorans.